A 392-amino-acid polypeptide reads, in one-letter code: Metallophosphoesterase 1 (392 aa).

The chain crosses the membrane as a helical span at residues 25-45 (KLAALVFAVVLFCEFLIYYLV). A divalent metal cation is bound by residues Asp73, Asp115, Asn153, His246, His300, and His302. Residues 352–372 (DTVLATYCVAAGLLVVLILVH) form a helical membrane-spanning segment.

It belongs to the metallophosphoesterase superfamily. MPPE1 family. As to quaternary structure, interacts with GPI-anchor proteins (via the GPI portion). Interacts with TMED10. Requires Mn(2+) as cofactor.

Its subcellular location is the endoplasmic reticulum-Golgi intermediate compartment membrane. In terms of biological role, metallophosphoesterase that catalyzes the removal of a side-chain ethanolamine-phosphate (EtNP) from the second mannose of the GPI-anchor protein intermediate. Participates in the glycan remodeling steps of GPI-anchor maturation to allow an efficient transport of GPI-anchor proteins from the endoplasmic reticulum to the Golgi. The sequence is that of Metallophosphoesterase 1 from Ailuropoda melanoleuca (Giant panda).